The following is a 343-amino-acid chain: 4-hydroxythreonine-4-phosphate dehydrogenase (343 aa).

Substrate contacts are provided by histidine 141 and threonine 142. Residues histidine 175, histidine 220, and histidine 275 each coordinate a divalent metal cation. Lysine 283, asparagine 292, and arginine 301 together coordinate substrate.

The protein belongs to the PdxA family. Homodimer. The cofactor is Zn(2+). It depends on Mg(2+) as a cofactor. Requires Co(2+) as cofactor.

The protein localises to the cytoplasm. The catalysed reaction is 4-(phosphooxy)-L-threonine + NAD(+) = 3-amino-2-oxopropyl phosphate + CO2 + NADH. The protein operates within cofactor biosynthesis; pyridoxine 5'-phosphate biosynthesis; pyridoxine 5'-phosphate from D-erythrose 4-phosphate: step 4/5. Functionally, catalyzes the NAD(P)-dependent oxidation of 4-(phosphooxy)-L-threonine (HTP) into 2-amino-3-oxo-4-(phosphooxy)butyric acid which spontaneously decarboxylates to form 3-amino-2-oxopropyl phosphate (AHAP). The chain is 4-hydroxythreonine-4-phosphate dehydrogenase from Janthinobacterium sp. (strain Marseille) (Minibacterium massiliensis).